Consider the following 82-residue polypeptide: Large ribosomal subunit protein uL23 (82 aa).

It belongs to the universal ribosomal protein uL23 family. As to quaternary structure, part of the 50S ribosomal subunit. Contacts protein L29.

Functionally, binds to 23S rRNA. One of the proteins that surrounds the polypeptide exit tunnel on the outside of the ribosome. The polypeptide is Large ribosomal subunit protein uL23 (Natronomonas pharaonis (strain ATCC 35678 / DSM 2160 / CIP 103997 / JCM 8858 / NBRC 14720 / NCIMB 2260 / Gabara) (Halobacterium pharaonis)).